We begin with the raw amino-acid sequence, 781 residues long: Transcription factor Sp3 (781 aa).

Over residues M1–E12 the composition is skewed to basic and acidic residues. 2 disordered regions span residues M1–D53 and T65–P88. Residues S20–G31 are compositionally biased toward gly residues. Low complexity predominate over residues E32–D53. S73 bears the Phosphoserine mark. K120 is covalently cross-linked (Glycyl lysine isopeptide (Lys-Gly) (interchain with G-Cter in SUMO)). Residues Q138–Q237 form a transactivation domain (Gln-rich) region. Positions Q301–Q338 are disordered. Over residues N308–S317 the composition is skewed to basic and acidic residues. A compositionally biased stretch (polar residues) spans I320–Q338. A transactivation domain (Gln-rich) region spans residues Q350–Q499. Positions V461 to Q469 match the 9aaTAD motif. The repressor domain stretch occupies residues I534–Q620. K551 bears the N6-acetyllysine; alternate mark. K551 is covalently cross-linked (Glycyl lysine isopeptide (Lys-Gly) (interchain with G-Cter in SUMO); alternate). K551 is covalently cross-linked (Glycyl lysine isopeptide (Lys-Gly) (interchain with G-Cter in SUMO1); alternate). A Glycyl lysine isopeptide (Lys-Gly) (interchain with G-Cter in SUMO2); alternate cross-link involves residue K551. Phosphoserine occurs at positions 563 and 566. A Glycyl lysine isopeptide (Lys-Gly) (interchain with G-Cter in SUMO2) cross-link involves residue K593. A C2H2-type 1 zinc finger spans residues H621–H645. Phosphoserine is present on S646. C2H2-type zinc fingers lie at residues F651 to H675 and F681 to H703.

It belongs to the Sp1 C2H2-type zinc-finger protein family. In terms of assembly, interacts with HLTF; the interaction may be required for basal transcriptional activity of HLTF. Interacts with HDAC1; the interaction deacetylates SP3 and regulates its transcriptional activity. Interacts with HDAC2 (preferably the CK2-phosphorylated form); the interaction deacetylates SP3 and regulates its transcriptional activity. Interacts with MEIS2 isoform 4 and PBX1 isoform PBX1a. Not glycosylated. In terms of processing, acetylated by histone acetyltransferase p300, deacetylated by HDACs. Acetylation/deacetylation states regulate transcriptional activity. Acetylation appears to activate transcription. Alternate sumoylation and acetylation at Lys-551 also control transcriptional activity. Ceramides can also regulate acetylation/deacetylation events through altering the interaction of HDAC with SP3. In vitro, C(18)-ceramides, but not C(16)-ceramides, increase the interaction of HDAC1 with SP3 and enhance the deacetylation of SP3 and the subsequent repression of the TERT promoter. Post-translationally, sumoylated on all isoforms. Sumoylated on 2 sites in longer isoforms with Lys-551 being the major site. Sumoylation at this site promotes nuclear localization to the nuclear periphery, nuclear dots and PML nuclear bodies. Sumoylation on Lys-551 represses the transactivation activity, except for the largest isoform, L-Sp3, which has little effect on transactivation. Alternate sumoylation and acetylation at Lys-551 also control transcriptional activity. Ubiquitously expressed.

It is found in the nucleus. Its subcellular location is the PML body. Its function is as follows. Transcriptional factor that can act as an activator or repressor depending on isoform and/or post-translational modifications. Binds to GT and GC boxes promoter elements. Competes with SP1 for the GC-box promoters. Weak activator of transcription but can activate a number of genes involved in different processes such as cell-cycle regulation, hormone-induction and house-keeping. The protein is Transcription factor Sp3 (SP3) of Homo sapiens (Human).